A 218-amino-acid polypeptide reads, in one-letter code: Elongation factor Ts (218 aa).

An involved in Mg(2+) ion dislocation from EF-Tu region spans residues 82-85 (TDFV).

Belongs to the EF-Ts family.

It localises to the cytoplasm. Associates with the EF-Tu.GDP complex and induces the exchange of GDP to GTP. It remains bound to the aminoacyl-tRNA.EF-Tu.GTP complex up to the GTP hydrolysis stage on the ribosome. The sequence is that of Elongation factor Ts from Prochlorococcus marinus (strain MIT 9303).